We begin with the raw amino-acid sequence, 224 residues long: Glutamate/aspartate import permease protein GltK (224 aa).

The Periplasmic segment spans residues 1–19 (MYEFDWSSIVPSLPYLLDG). A helical membrane pass occupies residues 20–40 (LVITLKITVTAVVIGILWGTM). The ABC transmembrane type-1 domain maps to 20–216 (LVITLKITVT…VISLSASLLV (197 aa)). Over 41-67 (LAVMRLSSFAPVAWFAKAYVNVFRSIP) the chain is Cytoplasmic. Residues 68-88 (LVMVLLWFYLIVPGFLQNVLG) traverse the membrane as a helical segment. Residues 89–94 (LSPKND) are Periplasmic-facing. The chain crosses the membrane as a helical span at residues 95 to 112 (IRLISAMVAFSMFEAAYY). Over 113-154 (SEIIRAGIQSISRGQSSAALALGMTHWQSMKLIILPQAFRAM) the chain is Cytoplasmic. Residues 155–175 (VPLLLTQGIVLFQDTSLVYVL) traverse the membrane as a helical segment. The Periplasmic portion of the chain corresponds to 176–196 (SLADFFRTASTIGERDGTQVE). Residues 197–217 (MILFAGFVYFVISLSASLLVS) form a helical membrane-spanning segment. Over 218–224 (YLKRRTA) the chain is Cytoplasmic.

This sequence belongs to the binding-protein-dependent transport system permease family. HisMQ subfamily. The complex is composed of two ATP-binding proteins (GltL), two transmembrane proteins (GltJ and GltK) and a solute-binding protein (GltI).

Its subcellular location is the cell inner membrane. In terms of biological role, part of the ABC transporter complex GltIJKL involved in glutamate and aspartate uptake. Probably responsible for the translocation of the substrate across the membrane. This Escherichia coli O157:H7 protein is Glutamate/aspartate import permease protein GltK (gltK).